Reading from the N-terminus, the 206-residue chain is FMN-dependent NADH:quinone oxidoreductase 4 (206 aa).

Residues Ser10 and 136–139 (SSGG) contribute to the FMN site.

It belongs to the azoreductase type 1 family. As to quaternary structure, homodimer. It depends on FMN as a cofactor.

It catalyses the reaction 2 a quinone + NADH + H(+) = 2 a 1,4-benzosemiquinone + NAD(+). The enzyme catalyses N,N-dimethyl-1,4-phenylenediamine + anthranilate + 2 NAD(+) = 2-(4-dimethylaminophenyl)diazenylbenzoate + 2 NADH + 2 H(+). Its function is as follows. Quinone reductase that provides resistance to thiol-specific stress caused by electrophilic quinones. Functionally, also exhibits azoreductase activity. Catalyzes the reductive cleavage of the azo bond in aromatic azo compounds to the corresponding amines. This chain is FMN-dependent NADH:quinone oxidoreductase 4, found in Pseudomonas fluorescens (strain ATCC BAA-477 / NRRL B-23932 / Pf-5).